Reading from the N-terminus, the 35-residue chain is Potassium channel toxin (35 aa).

3 disulfides stabilise this stretch: cysteine 6/cysteine 25, cysteine 11/cysteine 30, and cysteine 15/cysteine 32.

It belongs to the short scorpion toxin superfamily. Potassium channel inhibitor family. Alpha-KTx 21 subfamily. As to expression, expressed by the venom gland.

The protein resides in the secreted. Toxin that blocks voltage-gated potassium channels (Kv). In Tityus metuendus (Scorpion), this protein is Potassium channel toxin.